The following is an 832-amino-acid chain: Cytosolic carboxypeptidase-like protein 5 (832 aa).

Positions 27–50 (TVPSDGEGVGGAATAPTSGSASSP) are disordered. The segment covering 38–50 (AATAPTSGSASSP) has biased composition (low complexity). A Peptidase M14 domain is found at 157 to 571 (YPFSYSDCQD…ALAIAALDMA (415 aa)). 2 residues coordinate Zn(2+): His252 and Glu255. Residues 343 to 354 (NSKNPSNQQPSS) are compositionally biased toward low complexity. Disordered stretches follow at residues 343 to 362 (NSKN…PEVP) and 376 to 402 (LHLG…KTDP). Residues 384–401 (GENHDRWTETEPTEEKTD) are compositionally biased toward basic and acidic residues. Zn(2+) is bound at residue His435. The active-site Proton donor/acceptor is Glu517. A disordered region spans residues 606-752 (STANVGLNKK…ASPTSSRNMG (147 aa)). Over residues 621-636 (PPKSNNGLPVSCSENA) the composition is skewed to polar residues. A compositionally biased stretch (low complexity) spans 644 to 654 (STGTSTGGSSS). Residues 655-666 (QQNSPQMKNSPS) are compositionally biased toward polar residues. Over residues 708-752 (QQQQQQQQQQQQQQQQPLNQRSTTSSLAPSPTLASASPTSSRNMG) the composition is skewed to low complexity.

The protein belongs to the peptidase M14 family. Zn(2+) serves as cofactor.

The protein localises to the cytoplasm. It localises to the cytosol. It is found in the nucleus. Its subcellular location is the cytoskeleton. The protein resides in the spindle. The protein localises to the midbody. The catalysed reaction is gamma-L-glutamyl-L-glutamyl-[protein] + H2O = L-glutamyl-[protein] + L-glutamate. The enzyme catalyses (L-glutamyl)(n+1)-gamma-L-glutamyl-L-glutamyl-[protein] + H2O = (L-glutamyl)(n)-gamma-L-glutamyl-L-glutamyl-[protein] + L-glutamate. It catalyses the reaction C-terminal L-alpha-aminoacyl-L-glutamyl-[tubulin] + H2O = C-terminal L-alpha-aminoacyl-[tubulin] + L-glutamate. It carries out the reaction C-terminal L-alpha-aminoacyl-L-glutamyl-L-glutamyl-[tubulin] + H2O = C-terminal L-alpha-aminoacyl-L-glutamyl-[tubulin] + L-glutamate. In terms of biological role, metallocarboxypeptidase that mediates deglutamylation of tubulin and non-tubulin target proteins. Catalyzes the removal of polyglutamate side chains present on the gamma-carboxyl group of glutamate residues within the C-terminal tail of alpha- and beta-tubulin. Cleaves alpha- and gamma-linked polyglutamate tubulin side-chain, as well as the branching point glutamate. Also catalyzes the removal of alpha-linked glutamate residues from the carboxy-terminus of alpha-tubulin. Mediates deglutamylation of nucleotidyltransferase CGAS, leading to CGAS antiviral defense response activation. In Rattus norvegicus (Rat), this protein is Cytosolic carboxypeptidase-like protein 5 (Agbl5).